The following is a 155-amino-acid chain: FUN14 domain-containing protein 1 (155 aa).

At 1–47 the chain is on the cytoplasmic side; sequence MASRNPPPQDYESDDESYEVLDLTEYARRHHWWNRVFGHSSGPMVEK. Residues serine 13 and serine 17 each carry the phosphoserine modification. Residue tyrosine 18 is modified to Phosphotyrosine; by SRC. The short motif at 18–21 is the YXXL element; it reads YEVL. The chain crosses the membrane as a helical span at residues 48–68; that stretch reads YSVATQIVMGGVTGWCAGFLF. Over 69-74 the chain is Mitochondrial intermembrane; sequence QKVGKL. Residues 75–95 form a helical membrane-spanning segment; it reads AATAVGGGFLLLQVASHSGYV. Topologically, residues 96-133 are cytoplasmic; sequence QIDWKRVEKDVNKAKRQIKKRANKAAPEINNIIEEATD. Lysine 119 participates in a covalent cross-link: Glycyl lysine isopeptide (Lys-Gly) (interchain with G-Cter in ubiquitin). A helical transmembrane segment spans residues 134–154; that stretch reads FIKQNIVISSGFVGGFLLGLA. Position 155 (serine 155) is a topological domain, mitochondrial intermembrane.

It belongs to the FUN14 family. As to quaternary structure, interacts (via YXXL motif) with MAP1 LC3 family proteins MAP1LC3A, MAP1LC3B and GABARAP. Interacts with DNM1L/DPR1. Interacts with GPX4. In terms of processing, phosphorylation at Ser-13 by CK2 and at Tyr-18 by SRC inhibits activation of mitophagy. Following hypoxia, dephosphorylated at Tyr-18, leading to interaction with MAP1 LC3 family proteins and triggering mitophagy. Dephosphorylation is mediated by PGAM5. Phosphorylated by ULK1 at Ser-17 which enhances FUNDC1 binding to LC3. Post-translationally, ubiquitinated on Lys-119. Deubiquitinated by USP19; leading to hypoxia-induced DRP1 oligomerization and GTPase activity.

Its subcellular location is the mitochondrion outer membrane. Integral mitochondrial outer-membrane protein that mediates the formation of mitochondria-associated endoplasmic reticulum membranes (MAMs). In turn, mediates angiogenesis and neoangiogenesis through interference with intracellular Ca(2+) communication and regulation of the vascular endothelial growth factor receptor KDR/VEGFR2 expression at both mRNA and protein levels. Also acts as an activator of hypoxia-induced mitophagy, an important mechanism for mitochondrial quality and homeostasis, by interacting with and recruiting LC3 protein family to mitochondria. Mechanistically, recruits DRP1 at ER-mitochondria contact sites leading to DRP1 oligomerization and GTPase activity to facilitate mitochondrial fission during hypoxia. Additionally, plays a role in hepatic ferroptosis by interacting directly with glutathione peroxidase/GPX4 to facilitate its recruitment into mitochondria through TOM/TIM complex where it is degraded by mitophagy. The chain is FUN14 domain-containing protein 1 (Fundc1) from Mus musculus (Mouse).